A 296-amino-acid polypeptide reads, in one-letter code: Aldo-keto reductase MYCFIDRAFT_156381 (296 aa).

Asp14 provides a ligand contact to NADP(+). The active-site Proton donor is the Tyr19. His83 provides a ligand contact to substrate. NADP(+) contacts are provided by residues 113 to 114 (CN), Gln139, 168 to 178 (SPLAGGMLTDR), and Arg191. Residue Tyr201 coordinates substrate. Residue 255-263 (SSAEQLESN) coordinates NADP(+).

It belongs to the aldo/keto reductase family. Aldo/keto reductase 2 subfamily.

It functions in the pathway secondary metabolite biosynthesis. In terms of biological role, aldo-keto reductase; part of the gene cluster that mediates the biosynthesis of an emodin derivative that may be involved in black Sigatoka disease of banana. The pathway begins with the synthesis of atrochrysone thioester by the polyketide synthase PKS8-1. The atrochrysone carboxyl ACP thioesterase MYCFIDRAFT_190111 then breaks the thioester bond and releases the atrochrysone carboxylic acid from PKS8-1. The decarboxylase MYCFIDRAFT_34057 then catalyzes the concerted decarboxylation-elimination required to convert atochrysone carboxylic acid into emodin anthrone, which is further oxidized to emodin by the anthrone oxygenase MYCFIDRAFT_34418. The functions of the other tailoring enzymes as well as the final product of the cluster have still to be identified. This chain is Aldo-keto reductase MYCFIDRAFT_156381, found in Pseudocercospora fijiensis (strain CIRAD86) (Black leaf streak disease fungus).